The chain runs to 440 residues: Damage-control phosphatase ARMT1 (440 aa).

Mn(2+) contacts are provided by Asp-252 and Asn-253. 252–253 is a substrate binding site; that stretch reads DN. The S-adenosyl-L-methionine site is built by Glu-257 and Asp-290. Position 290 (Asp-290) interacts with Mn(2+). Residues 366-370 and Lys-403 each bind substrate; that span reads DLNYR. The short motif at 400–403 is the Subfamily III RTxK motif element; it reads RTLK.

Belongs to the damage-control phosphatase family. Sugar phosphate phosphatase III subfamily. Requires Mn(2+) as cofactor. Ni(2+) is required as a cofactor. In terms of processing, automethylated.

The catalysed reaction is beta-D-fructose 1-phosphate + H2O = D-fructose + phosphate. It catalyses the reaction beta-D-fructose 6-phosphate = dihydroxyacetone + D-glyceraldehyde 3-phosphate. It carries out the reaction L-glutamyl-[protein] + S-adenosyl-L-methionine = [protein]-L-glutamate 5-O-methyl ester + S-adenosyl-L-homocysteine. Metal-dependent phosphatase that shows phosphatase activity against several substrates, including fructose-1-phosphate and fructose-6-phosphate. Its preference for fructose-1-phosphate, a strong glycating agent that causes DNA damage rather than a canonical yeast metabolite, suggests a damage-control function in hexose phosphate metabolism. Has also been shown to have O-methyltransferase activity that methylates glutamate residues of target proteins to form gamma-glutamyl methyl ester residues. Possibly methylates PCNA, suggesting it is involved in the DNA damage response. The sequence is that of Damage-control phosphatase ARMT1 from Xenopus tropicalis (Western clawed frog).